The following is a 300-amino-acid chain: uncharacterized protein (300 aa).

Residues 1 to 7 (MGSTRKG) are Periplasmic-facing. Residues 8–28 (MLNVLIAAVLWGSSGVCAQYI) traverse the membrane as a helical segment. An EamA 1 domain is found at 16–145 (VLWGSSGVCA…SLIGTFLLVT (130 aa)). Residues 29 to 45 (MEQSRMSSQFLTMIRLL) are Cytoplasmic-facing. The chain crosses the membrane as a helical span at residues 46-66 (FAGLILVTFSFMHGDKIFSIL). Residues 67-71 (KNRKD) lie on the Periplasmic side of the membrane. A helical transmembrane segment spans residues 72-92 (ALSLLIFSVVGALTVQLTFLL). Over 93-99 (TIEKSNA) the chain is Cytoplasmic. A helical transmembrane segment spans residues 100-120 (ATATVLQFLSPTIIVAWFALA). Over 121–124 (RRTR) the chain is Periplasmic. A helical transmembrane segment spans residues 125–145 (PGILVLTAILTSLIGTFLLVT). The Cytoplasmic segment spans residues 146-151 (HGNPTS). Residues 152–172 (LSISSAALFWGIASAFAAAFY) form a helical membrane-spanning segment. The 125-residue stretch at 167–291 (FAAAFYTTWP…ILSSVILISL (125 aa)) folds into the EamA 2 domain. The Periplasmic portion of the chain corresponds to 173–184 (TTWPSRLIAQYG). The helical transmembrane segment at 185–205 (TLPVVGWSMSFGGLILLPFYA) threads the bilayer. The Cytoplasmic segment spans residues 206–216 (KEGTHFAVSGS). The chain crosses the membrane as a helical span at residues 217–237 (LILAFFYLVVIGTSLTFSLYL). Residues 238-263 (KGAQLIGGPKASILSCAEPLSSALLS) are Periplasmic-facing. The helical transmembrane segment at 264-284 (LLLLGISFTLPDWLGTLLILS) threads the bilayer. The Cytoplasmic segment spans residues 285–300 (SVILISLDSRRRARAA).

It belongs to the EamA transporter family.

It is found in the cell inner membrane. This is an uncharacterized protein from Salmonella typhimurium (strain LT2 / SGSC1412 / ATCC 700720).